A 132-amino-acid chain; its full sequence is Small ribosomal subunit protein uS9 (132 aa).

Belongs to the universal ribosomal protein uS9 family.

The protein is Small ribosomal subunit protein uS9 (rpsI) of Mycoplasma genitalium (strain ATCC 33530 / DSM 19775 / NCTC 10195 / G37) (Mycoplasmoides genitalium).